Here is a 350-residue protein sequence, read N- to C-terminus: Autophagy-related protein 3 (350 aa).

The segment at 85–166 (NFAGDAGLEE…EEDDEAIIRD (82 aa)) is flexible region. A disordered region spans residues 97–171 (VDDGDEFKGS…AIIRDTDASG (75 aa)). The span at 102-113 (EFKGSKGDDDGW) shows a compositional bias: basic and acidic residues. Over residues 146–161 (DDDDDIPDMEDEEDDE) the composition is skewed to acidic residues. Cys-244 serves as the catalytic Glycyl thioester intermediate. The segment at 248-326 (PVMKTLLDRA…DQEVAIRVDQ (79 aa)) is handle region. 2 positions are modified to N6-acetyllysine: Lys-262 and Lys-267.

It belongs to the ATG3 family. As to quaternary structure, monomer. Interacts with ATG8 through an intermediate thioester bond through the C-terminal Gly of ATG8. Also interacts with the 40 amino acid C-terminal region of the E1-like ATG7 enzyme. Also interacts with the ATG12-ATG5 conjugate. Interacts with HAT1. Acetylated by HAT1 at Lys-262 and Lys-267, which affects the interaction with ATG8 and prevents autophagy during both appressorium development and nutrient starvation.

It localises to the preautophagosomal structure. It is found in the cytoplasm. In terms of biological role, E2 conjugating enzyme required for the cytoplasm to vacuole transport (Cvt) and autophagy. Required for selective autophagic degradation of the nucleus (nucleophagy) as well as for mitophagy which contributes to regulate mitochondrial quantity and quality by eliminating the mitochondria to a basal level to fulfill cellular energy requirements and preventing excess ROS production. Responsible for the E2-like covalent binding of phosphatidylethanolamine to the C-terminal Gly of ATG8. The ATG12-ATG5 conjugate plays a role of an E3 and promotes the transfer of ATG8 from ATG3 to phosphatidylethanolamine (PE). This step is required for the membrane association of ATG8. The formation of the ATG8-phosphatidylethanolamine conjugate is essential for autophagy and for the cytoplasm to vacuole transport (Cvt). The ATG8-PE conjugate mediates tethering between adjacent membranes and stimulates membrane hemifusion, leading to expansion of the autophagosomal membrane during autophagy. Plays a role in appressorium formation and pathogenicity. The protein is Autophagy-related protein 3 of Pyricularia oryzae (strain 70-15 / ATCC MYA-4617 / FGSC 8958) (Rice blast fungus).